Consider the following 854-residue polypeptide: Protein mono-ADP-ribosyltransferase PARP9 (854 aa).

Macro domains follow at residues 107-296 (LQVF…EFIL) and 306-487 (TPSF…AKRS). A PARP catalytic domain is found at 628-850 (IQQQKTQDEM…QHPWRGFASG (223 aa)).

This sequence belongs to the ARTD/PARP family. As to quaternary structure, forms a stable complex with E3 ligase DTX3L; the interaction is required for PARP9 mediated ADP-ribosylation of ubiquitin. Interacts (via PARP catalytic domain) with DTX3L (via N-terminus). Forms a complex with STAT1 and DTX3L independently of IFNB1 or IFNG-mediated STAT1 'Tyr-701' phosphorylation. Forms a complex with STAT1, DTX3L and histone H2B H2BC9/H2BJ; the interaction is likely to induce H2BC9/H2BJ ubiquitination. Interacts (via N-terminus) with STAT1. Interacts with PARP14 in IFNG-stimulated macrophages; the interaction prevents PARP14-mediated STAT1 and STAT6 ADP-riboslylation. Interacts with PARP1 (when poly-ADP-ribosylated). Post-translationally, ADP-ribosylated by PARP14. Expressed in lymphocyte-rich tissues, spleen, lymph nodes, peripheral blood lymphocytes and colonic mucosa. Expressed in macrophages. Also expressed in nonhematopoietic tissues such as heart and skeletal muscle. Isoform 2 is the predominant form. Most abundantly expressed in lymphomas with a brisk host inflammatory response. In diffuse large B-cell lymphomas tumors, expressed specifically by malignant B-cells.

It localises to the cytoplasm. The protein localises to the cytosol. The protein resides in the nucleus. The catalysed reaction is [protein]-C-terminal glycine + NAD(+) = [protein]-C-terminal O-(ADP-D-ribosyl)-glycine + nicotinamide. With respect to regulation, binding to poly(ADP-ribose) does not affect its activity. ADP-ribosyltransferase which, in association with E3 ligase DTX3L, plays a role in DNA damage repair and in immune responses including interferon-mediated antiviral defenses. Within the complex, enhances DTX3L E3 ligase activity which is further enhanced by PARP9 binding to poly(ADP-ribose). In association with DTX3L and in presence of E1 and E2 enzymes, mediates NAD(+)-dependent mono-ADP-ribosylation of ubiquitin which prevents ubiquitin conjugation to substrates such as histones. During DNA repair, PARP1 recruits PARP9/BAL1-DTX3L complex to DNA damage sites via PARP9 binding to ribosylated PARP1. Subsequent PARP1-dependent PARP9/BAL1-DTX3L-mediated ubiquitination promotes the rapid and specific recruitment of 53BP1/TP53BP1, UIMC1/RAP80, and BRCA1 to DNA damage sites. In response to DNA damage, PARP9-DTX3L complex is required for efficient non-homologous end joining (NHEJ); the complex function is negatively modulated by PARP9 activity. Dispensable for B-cell receptor (BCR) assembly through V(D)J recombination and class switch recombination (CSR). In macrophages, positively regulates pro-inflammatory cytokines production in response to IFNG stimulation by suppressing PARP14-mediated STAT1 ADP-ribosylation and thus promoting STAT1 phosphorylation. Also suppresses PARP14-mediated STAT6 ADP-ribosylation. This Homo sapiens (Human) protein is Protein mono-ADP-ribosyltransferase PARP9 (PARP9).